A 495-amino-acid chain; its full sequence is Cobyric acid synthase (495 aa).

The GATase cobBQ-type domain occupies K256–V444. The Nucleophile role is filled by C337. H436 is a catalytic residue.

The protein belongs to the CobB/CobQ family. CobQ subfamily.

It participates in cofactor biosynthesis; adenosylcobalamin biosynthesis. Its function is as follows. Catalyzes amidations at positions B, D, E, and G on adenosylcobyrinic A,C-diamide. NH(2) groups are provided by glutamine, and one molecule of ATP is hydrogenolyzed for each amidation. This is Cobyric acid synthase from Bacteroides fragilis (strain ATCC 25285 / DSM 2151 / CCUG 4856 / JCM 11019 / LMG 10263 / NCTC 9343 / Onslow / VPI 2553 / EN-2).